A 174-amino-acid chain; its full sequence is Ribulose bisphosphate carboxylase small subunit, chloroplastic 1 (174 aa).

The transit peptide at Met1–Arg45 directs the protein to the chloroplast.

This sequence belongs to the RuBisCO small chain family. As to quaternary structure, heterohexadecamer of 8 large and 8 small subunits.

The protein localises to the plastid. It is found in the chloroplast. In terms of biological role, ruBisCO catalyzes two reactions: the carboxylation of D-ribulose 1,5-bisphosphate, the primary event in carbon dioxide fixation, as well as the oxidative fragmentation of the pentose substrate. Both reactions occur simultaneously and in competition at the same active site. Although the small subunit is not catalytic it is essential for maximal activity. This is Ribulose bisphosphate carboxylase small subunit, chloroplastic 1 from Triticum aestivum (Wheat).